The chain runs to 348 residues: Aspartate carbamoyltransferase catalytic subunit (348 aa).

Residues Arg59 and Thr60 each coordinate carbamoyl phosphate. Lys87 is a binding site for L-aspartate. The carbamoyl phosphate site is built by Arg109, His142, and Gln145. 2 residues coordinate L-aspartate: Arg182 and Arg253. Carbamoyl phosphate-binding residues include Gly294 and Pro295.

Belongs to the aspartate/ornithine carbamoyltransferase superfamily. ATCase family. Heterododecamer (2C3:3R2) of six catalytic PyrB chains organized as two trimers (C3), and six regulatory PyrI chains organized as three dimers (R2).

It catalyses the reaction carbamoyl phosphate + L-aspartate = N-carbamoyl-L-aspartate + phosphate + H(+). It participates in pyrimidine metabolism; UMP biosynthesis via de novo pathway; (S)-dihydroorotate from bicarbonate: step 2/3. In terms of biological role, catalyzes the condensation of carbamoyl phosphate and aspartate to form carbamoyl aspartate and inorganic phosphate, the committed step in the de novo pyrimidine nucleotide biosynthesis pathway. This Prochlorococcus marinus (strain MIT 9303) protein is Aspartate carbamoyltransferase catalytic subunit.